A 483-amino-acid chain; its full sequence is Xylulose kinase (483 aa).

77 to 78 (MH) is a binding site for substrate. D233 acts as the Proton acceptor in catalysis.

It belongs to the FGGY kinase family.

It catalyses the reaction D-xylulose + ATP = D-xylulose 5-phosphate + ADP + H(+). In terms of biological role, catalyzes the phosphorylation of D-xylulose to D-xylulose 5-phosphate. This chain is Xylulose kinase, found in Klebsiella pneumoniae.